A 297-amino-acid polypeptide reads, in one-letter code: uncharacterized protein (297 aa).

WD repeat units follow at residues 12-51 (KAKE…CIHE), 54-93 (GHGH…VDRR), 96-135 (GHLA…FSPI), 140-177 (DAKD…LSSD), 179-217 (FSHP…ILKS), 222-261 (KNME…QITS), and 265-297 (VGTP…YQYN).

The protein belongs to the WD repeat MORG1 family.

Its subcellular location is the cytoplasm. It is found in the nucleus. This is an uncharacterized protein from Schizosaccharomyces pombe (strain 972 / ATCC 24843) (Fission yeast).